The chain runs to 346 residues: Glycosyltransferase 1 domain-containing protein 1 (346 aa).

A signal peptide spans 1-16 (MRLLFLAVLRPHTGNA).

It belongs to the glycosyltransferase group 1 family. Glycosyltransferase 4 subfamily.

The protein localises to the secreted. In Pongo abelii (Sumatran orangutan), this protein is Glycosyltransferase 1 domain-containing protein 1 (GLT1D1).